Here is a 146-residue protein sequence, read N- to C-terminus: MLKKNKDELNDLEYLVTQENGTEPPFQNEYWNHFEKGIYVDKLSGKPLFTSEEKFESDCGWPSFSKALSDDEVVELVDKSFGMVRTEVRSEDSNSHLGHVFNDGPAETGGLRYCINSAAVQFIPYDKLEELGYGDLIPHFKDQGEK.

Residues leucine 2 to tyrosine 125 enclose the MsrB domain. Residue cysteine 114 is the Nucleophile of the active site.

The protein belongs to the MsrB Met sulfoxide reductase family.

It carries out the reaction L-methionyl-[protein] + [thioredoxin]-disulfide + H2O = L-methionyl-(R)-S-oxide-[protein] + [thioredoxin]-dithiol. This is Peptide methionine sulfoxide reductase MsrB from Staphylococcus carnosus (strain TM300).